Here is a 243-residue protein sequence, read N- to C-terminus: Proteasome subunit beta (243 aa).

Polar residues predominate over residues 1–16 (MRAPQHNSDFSRTVNQ). The tract at residues 1–29 (MRAPQHNSDFSRTVNQLADDPNPYEPEVG) is disordered. A propeptide spans 1-48 (MRAPQHNSDFSRTVNQLADDPNPYEPEVGSMPKNEFSRADLDNVNKTG) (removed in mature form; by autocatalysis). Residue Thr49 is the Nucleophile of the active site.

This sequence belongs to the peptidase T1B family. As to quaternary structure, the 20S proteasome core is composed of 14 alpha and 14 beta subunits that assemble into four stacked heptameric rings, resulting in a barrel-shaped structure. The two inner rings, each composed of seven catalytic beta subunits, are sandwiched by two outer rings, each composed of seven alpha subunits. The catalytic chamber with the active sites is on the inside of the barrel. Has a gated structure, the ends of the cylinder being occluded by the N-termini of the alpha-subunits. Is capped at one or both ends by the proteasome regulatory ATPase, PAN.

It is found in the cytoplasm. The catalysed reaction is Cleavage of peptide bonds with very broad specificity.. Its activity is regulated as follows. The formation of the proteasomal ATPase PAN-20S proteasome complex, via the docking of the C-termini of PAN into the intersubunit pockets in the alpha-rings, triggers opening of the gate for substrate entry. Interconversion between the open-gate and close-gate conformations leads to a dynamic regulation of the 20S proteasome proteolysis activity. Component of the proteasome core, a large protease complex with broad specificity involved in protein degradation. The polypeptide is Proteasome subunit beta (Natrialba magadii (strain ATCC 43099 / DSM 3394 / CCM 3739 / CIP 104546 / IAM 13178 / JCM 8861 / NBRC 102185 / NCIMB 2190 / MS3) (Natronobacterium magadii)).